Here is a 101-residue protein sequence, read N- to C-terminus: NADH-quinone oxidoreductase subunit K (101 aa).

3 helical membrane passes run 4 to 24, 30 to 50, and 61 to 81; these read LPHY…GIFV, IVIL…LVAF, and IFAM…LAIL.

The protein belongs to the complex I subunit 4L family. NDH-1 is composed of 14 different subunits. Subunits NuoA, H, J, K, L, M, N constitute the membrane sector of the complex.

It localises to the cell inner membrane. It carries out the reaction a quinone + NADH + 5 H(+)(in) = a quinol + NAD(+) + 4 H(+)(out). Functionally, NDH-1 shuttles electrons from NADH, via FMN and iron-sulfur (Fe-S) centers, to quinones in the respiratory chain. The immediate electron acceptor for the enzyme in this species is believed to be ubiquinone. Couples the redox reaction to proton translocation (for every two electrons transferred, four hydrogen ions are translocated across the cytoplasmic membrane), and thus conserves the redox energy in a proton gradient. This Caulobacter vibrioides (strain ATCC 19089 / CIP 103742 / CB 15) (Caulobacter crescentus) protein is NADH-quinone oxidoreductase subunit K.